We begin with the raw amino-acid sequence, 236 residues long: NADH-quinone oxidoreductase subunit C (236 aa).

Residues 1-20 (MSPPNQDAQEGRPDSPTAEV) are disordered.

Belongs to the complex I 30 kDa subunit family. NDH-1 is composed of 14 different subunits. Subunits NuoB, C, D, E, F, and G constitute the peripheral sector of the complex.

The protein resides in the cell membrane. The enzyme catalyses a quinone + NADH + 5 H(+)(in) = a quinol + NAD(+) + 4 H(+)(out). Its function is as follows. NDH-1 shuttles electrons from NADH, via FMN and iron-sulfur (Fe-S) centers, to quinones in the respiratory chain. The immediate electron acceptor for the enzyme in this species is believed to be a menaquinone. Couples the redox reaction to proton translocation (for every two electrons transferred, four hydrogen ions are translocated across the cytoplasmic membrane), and thus conserves the redox energy in a proton gradient. The polypeptide is NADH-quinone oxidoreductase subunit C (Mycobacterium tuberculosis (strain ATCC 25177 / H37Ra)).